We begin with the raw amino-acid sequence, 131 residues long: Con-Ins Q1b (131 aa).

Residues 1–24 (MTTSSYFLLVALGLLLYLCQSSFG) form the signal peptide. Disulfide bonds link cysteine 29–cysteine 107, cysteine 41–cysteine 110, cysteine 53–cysteine 123, and cysteine 109–cysteine 114. A propeptide spans 59 to 92 (LQGGTDDARKKRGRASLLRKRRGFLSMLKARAKR) (c peptide). Glutamate 118 carries the post-translational modification 4-carboxyglutamate; partial. Residue serine 130 is modified to Serine amide.

The protein belongs to the insulin family. As to quaternary structure, heterodimer of A and B chains; disulfide-linked. Expressed by the venom gland.

The protein localises to the secreted. Its function is as follows. This venom insulin facilitates prey capture by rapidly inducing hypoglycemic shock. Intraperitoneal injection of this peptide into zebrafish lowers blood glucose with the same potency than human insulin. In vivo, when applied to water, this peptide reduces overall locomotor activity of zebrafish larvae, observed as a significant decrease in the percentage of time spent swimming and movement frequency. This is Con-Ins Q1b from Conus quercinus (Oak cone).